We begin with the raw amino-acid sequence, 325 residues long: Elongation factor P--(R)-beta-lysine ligase (325 aa).

76-78 contacts substrate; the sequence is SPE. ATP is bound by residues 100–102 and Asn109; that span reads RNE. Tyr118 is a substrate binding site. 244 to 245 provides a ligand contact to ATP; sequence EL. Glu251 contributes to the substrate binding site. Position 300 (Gly300) interacts with ATP.

Belongs to the class-II aminoacyl-tRNA synthetase family. EpmA subfamily. In terms of assembly, homodimer.

It carries out the reaction D-beta-lysine + L-lysyl-[protein] + ATP = N(6)-((3R)-3,6-diaminohexanoyl)-L-lysyl-[protein] + AMP + diphosphate + H(+). With EpmB is involved in the beta-lysylation step of the post-translational modification of translation elongation factor P (EF-P). Catalyzes the ATP-dependent activation of (R)-beta-lysine produced by EpmB, forming a lysyl-adenylate, from which the beta-lysyl moiety is then transferred to the epsilon-amino group of a conserved specific lysine residue in EF-P. The polypeptide is Elongation factor P--(R)-beta-lysine ligase (Edwardsiella ictaluri (strain 93-146)).